The primary structure comprises 177 residues: Probable chemoreceptor glutamine deamidase CheD (177 aa).

It belongs to the CheD family.

The enzyme catalyses L-glutaminyl-[protein] + H2O = L-glutamyl-[protein] + NH4(+). Its function is as follows. Probably deamidates glutamine residues to glutamate on methyl-accepting chemotaxis receptors (MCPs), playing an important role in chemotaxis. This Pseudomonas fluorescens (strain SBW25) protein is Probable chemoreceptor glutamine deamidase CheD.